The sequence spans 257 residues: MPKIGIIGGSGVYGVFEPKEVVKVHTPYGRPSAPIEIGEIEGVEVAFIPRHGKYHEFPPHQVPYRANIWALHELGVERVIAINAVGSLKEEYKPGDIVIIDQFIDFTKKREYTFYNGPKVAHVSMADPFCPELRKIFIETAKELNLPVHERGTYVCIEGPRFSTRAESRMFRQFADVIGMTLVPEVNLARELGMCYVNISTVTDYDVWAEKPVDAQEVLRVMKENEEKVQKLLKRAIPKIPEERKCGCADVLKTMFV.

Phosphate is bound by residues S10 and 50-51 (RH). M180 contacts substrate. T181 is a binding site for phosphate. 204-206 (DYD) provides a ligand contact to substrate.

It belongs to the PNP/MTAP phosphorylase family. MTAP subfamily. In terms of assembly, homohexamer. Dimer of a homotrimer.

It carries out the reaction S-methyl-5'-thioadenosine + phosphate = 5-(methylsulfanyl)-alpha-D-ribose 1-phosphate + adenine. Its pathway is amino-acid biosynthesis; L-methionine biosynthesis via salvage pathway; S-methyl-5-thio-alpha-D-ribose 1-phosphate from S-methyl-5'-thioadenosine (phosphorylase route): step 1/1. Catalyzes the reversible phosphorylation of S-methyl-5'-thioadenosine (MTA) to adenine and 5-methylthioribose-1-phosphate. Involved in the breakdown of MTA, a major by-product of polyamine biosynthesis. Responsible for the first step in the methionine salvage pathway after MTA has been generated from S-adenosylmethionine. Has broad substrate specificity with 6-aminopurine nucleosides as preferred substrates. This is S-methyl-5'-thioadenosine phosphorylase from Pyrococcus horikoshii (strain ATCC 700860 / DSM 12428 / JCM 9974 / NBRC 100139 / OT-3).